Here is a 594-residue protein sequence, read N- to C-terminus: UvrABC system protein C (594 aa).

One can recognise a GIY-YIG domain in the interval 14 to 91 (DKPGCYLMKD…IKKHDPKYNV (78 aa)). The UVR domain maps to 196–231 (SDIKEQLRERMEKAAEDLDFERAKELRDTIAQMEKV).

It belongs to the UvrC family. Interacts with UvrB in an incision complex.

The protein localises to the cytoplasm. Its function is as follows. The UvrABC repair system catalyzes the recognition and processing of DNA lesions. UvrC both incises the 5' and 3' sides of the lesion. The N-terminal half is responsible for the 3' incision and the C-terminal half is responsible for the 5' incision. The sequence is that of UvrABC system protein C from Shouchella clausii (strain KSM-K16) (Alkalihalobacillus clausii).